We begin with the raw amino-acid sequence, 219 residues long: Cytochrome c oxidase assembly protein CtaG (219 aa).

Polar residues predominate over residues 1 to 13; that stretch reads MDATDQGKSTSTT. A disordered region spans residues 1-24; sequence MDATDQGKSTSTTAAQAAPGKAAP. The Cytoplasmic segment spans residues 1 to 29; sequence MDATDQGKSTSTTAAQAAPGKAAPRRGIG. A compositionally biased stretch (low complexity) spans 14 to 24; sequence AAQAAPGKAAP. A helical; Signal-anchor for type II membrane protein membrane pass occupies residues 30-52; sequence RDALVGGICGAVVVLMIGASYAA. Residues 53–219 lie on the Periplasmic side of the membrane; the sequence is VPFYNWFCRA…GEPDKPRGSL (167 aa).

This sequence belongs to the COX11/CtaG family.

The protein resides in the cell inner membrane. Its function is as follows. Exerts its effect at some terminal stage of cytochrome c oxidase synthesis, probably by being involved in the insertion of the copper B into subunit I. The polypeptide is Cytochrome c oxidase assembly protein CtaG (Bradyrhizobium sp. (strain ORS 278)).